The primary structure comprises 339 residues: MRVYYDRDADLNLIKGKKVVIVGYGSQGHAHALNLRDSGVKDIVVALRPGSASAKKAEGEGFKVMTPAEAAKWGDVVMMLTPDELQADIYRESLHDNMKQGAALLFAHGLNVHFNLIEPRKDLDVLMIAPKGPGHTVRSEYQRGGGVPTLIAIAQDASGNAHDLGLSYASANGGGRAGIIETTFKEECETDLFGEQVVLCGGLVELIRAGFETLVEAGYAPEMAYFECLHEVKLIVDLIYEGGIANMNYSISNTAEYGEYVTGPRIITPETKAEMKRVLTDIQTGKFTRDWMLENKVNQASFKATRARHNAHQIEAVGEKLREMMPWIKAKALVDKSKN.

The 182-residue stretch at 1-182 (MRVYYDRDAD…GGGRAGIIET (182 aa)) folds into the KARI N-terminal Rossmann domain. Residues 24 to 27 (YGSQ), Arg48, Ser51, Ser53, and 83 to 86 (DELQ) contribute to the NADP(+) site. The active site involves His108. Residue Gly134 participates in NADP(+) binding. The region spanning 183 to 328 (TFKEECETDL…EKLREMMPWI (146 aa)) is the KARI C-terminal knotted domain. Asp191, Glu195, Glu227, and Glu231 together coordinate Mg(2+). Ser252 contributes to the substrate binding site.

Belongs to the ketol-acid reductoisomerase family. Mg(2+) is required as a cofactor.

The catalysed reaction is (2R)-2,3-dihydroxy-3-methylbutanoate + NADP(+) = (2S)-2-acetolactate + NADPH + H(+). The enzyme catalyses (2R,3R)-2,3-dihydroxy-3-methylpentanoate + NADP(+) = (S)-2-ethyl-2-hydroxy-3-oxobutanoate + NADPH + H(+). The protein operates within amino-acid biosynthesis; L-isoleucine biosynthesis; L-isoleucine from 2-oxobutanoate: step 2/4. It participates in amino-acid biosynthesis; L-valine biosynthesis; L-valine from pyruvate: step 2/4. Its function is as follows. Involved in the biosynthesis of branched-chain amino acids (BCAA). Catalyzes an alkyl-migration followed by a ketol-acid reduction of (S)-2-acetolactate (S2AL) to yield (R)-2,3-dihydroxy-isovalerate. In the isomerase reaction, S2AL is rearranged via a Mg-dependent methyl migration to produce 3-hydroxy-3-methyl-2-ketobutyrate (HMKB). In the reductase reaction, this 2-ketoacid undergoes a metal-dependent reduction by NADPH to yield (R)-2,3-dihydroxy-isovalerate. This chain is Ketol-acid reductoisomerase (NADP(+)), found in Azorhizobium caulinodans (strain ATCC 43989 / DSM 5975 / JCM 20966 / LMG 6465 / NBRC 14845 / NCIMB 13405 / ORS 571).